Reading from the N-terminus, the 157-residue chain is Large ribosomal subunit protein uL3 (157 aa).

The disordered stretch occupies residues 57 to 98 (GKGFAGSIKRHNQSRGPESHGSRYHRRPGSMGPIKGKLKGKK).

Belongs to the universal ribosomal protein uL3 family. Part of the 50S ribosomal subunit. Forms a cluster with proteins L14 and L19.

Its function is as follows. One of the primary rRNA binding proteins, it binds directly near the 3'-end of the 23S rRNA, where it nucleates assembly of the 50S subunit. This Onion yellows phytoplasma (strain OY-M) protein is Large ribosomal subunit protein uL3 (rplC).